The primary structure comprises 550 residues: Hydroxylamine reductase (550 aa).

Positions 3, 6, 18, and 25 each coordinate [2Fe-2S] cluster. 8 residues coordinate hybrid [4Fe-2O-2S] cluster: His-249, Glu-273, Cys-317, Cys-405, Cys-433, Cys-458, Glu-492, and Lys-494. Cys-405 bears the Cysteine persulfide mark.

It belongs to the HCP family. [2Fe-2S] cluster serves as cofactor. Requires hybrid [4Fe-2O-2S] cluster as cofactor.

Its subcellular location is the cytoplasm. It catalyses the reaction A + NH4(+) + H2O = hydroxylamine + AH2 + H(+). Catalyzes the reduction of hydroxylamine to form NH(3) and H(2)O. The polypeptide is Hydroxylamine reductase (Yersinia pseudotuberculosis serotype IB (strain PB1/+)).